The chain runs to 182 residues: MGLRPAKIDRDVDKPAYTRREYIRGAPGPKITIFDMGNLSAEFEYEVSLHAEQAMQIRQNALEAIRIQVNRYLQKNVGRSNYHFKIRVYPFQVLRENPMATGRKADRYGNGMRRPFGKPIGLAARVRKDQKILTVWVNGQHLKFALGAMHRAKMKLPYSAYYRIYDKEGNDVTTKVLSTMKL.

The protein belongs to the universal ribosomal protein uL16 family. Part of the 50S ribosomal subunit.

The chain is Large ribosomal subunit protein uL16 from Thermococcus kodakarensis (strain ATCC BAA-918 / JCM 12380 / KOD1) (Pyrococcus kodakaraensis (strain KOD1)).